The following is a 373-amino-acid chain: D-alanine--D-alanine ligase (373 aa).

An ATP-grasp domain is found at 156–363; it reads KKLLAADGLP…YPTLLATMIE (208 aa). Residue 184 to 239 coordinates ATP; the sequence is CERLGLPVFVKPARGGSSIGVSRVSSWDQLPAAVARARRHDPKVIVEAAISGRELE. Mg(2+) is bound by residues Asp318, Glu330, and Asn332.

This sequence belongs to the D-alanine--D-alanine ligase family. It depends on Mg(2+) as a cofactor. Mn(2+) is required as a cofactor.

It localises to the cytoplasm. It carries out the reaction 2 D-alanine + ATP = D-alanyl-D-alanine + ADP + phosphate + H(+). It functions in the pathway cell wall biogenesis; peptidoglycan biosynthesis. In terms of biological role, cell wall formation. This Mycobacterium tuberculosis (strain ATCC 25177 / H37Ra) protein is D-alanine--D-alanine ligase.